Here is a 244-residue protein sequence, read N- to C-terminus: MKLIVLENEEQVANKAAQIISEQIKNKPNSVLGLATGSTPINTYKKLIQMYQEKQISFKDVISFNLDEYKDIDKNNKQSYYYFMKEQLFNYIDINKNNCYIPNASFYDNPIAYDELIKKANGIDLQLLGIGINGHIGFNEPDSSFDSLTQIVDLTNSTIKANSRFFDSIDQVPTQAISMGLQSIMNAKKILLLATGINKSEAIYHLIKGQITKKWPCTILQKHNDVTIIIDKNAASKLTNLKAN.

Residue Asp67 is the Proton acceptor; for enolization step of the active site. The active-site For ring-opening step is Asn133. The Proton acceptor; for ring-opening step role is filled by His135. The active-site For ring-opening step is the Glu140.

Belongs to the glucosamine/galactosamine-6-phosphate isomerase family. NagB subfamily.

It catalyses the reaction alpha-D-glucosamine 6-phosphate + H2O = beta-D-fructose 6-phosphate + NH4(+). Its pathway is amino-sugar metabolism; N-acetylneuraminate degradation; D-fructose 6-phosphate from N-acetylneuraminate: step 5/5. In terms of biological role, catalyzes the reversible isomerization-deamination of glucosamine 6-phosphate (GlcN6P) to form fructose 6-phosphate (Fru6P) and ammonium ion. This is Glucosamine-6-phosphate deaminase from Mycoplasma mycoides subsp. mycoides SC (strain CCUG 32753 / NCTC 10114 / PG1).